Here is a 1135-residue protein sequence, read N- to C-terminus: Envelopment polyprotein (1135 aa).

The signal sequence occupies residues 1 to 35; it reads MRILKLLELVVKVSLFTIALSSVLLAFLIFRATDA. The Lumenal portion of the chain corresponds to 36–314; sequence KVEIIRGDHP…KYSKSIYKQT (279 aa). The Cell attachment site signature appears at 41–43; the sequence is RGD. Intrachain disulfides connect Cys-114-Cys-145 and Cys-122-Cys-156. Asn-116 carries N-linked (GlcNAc...) asparagine; by host glycosylation. The interval 177 to 195 is non-covalent dimerization; it reads LDKKRHFSVGGKFFISESL. The N-linked (GlcNAc...) asparagine; by host glycan is linked to Asn-210. A disulfide bridge links Cys-224 with Cys-285. Residues 315–366 traverse the membrane as a helical segment; that stretch reads ACINFSWIRLILIALLIYFPIRWLVNKTTKPLFLWYDLMGLITYPVLLLINC. Residues 367-484 are Cytoplasmic-facing; that stretch reads LWKYFPLKCS…VPGCPFLVTS (118 aa). The segment at 437–484 is signal for signal peptide peptidase; that stretch reads LSLSLLKFVTEILIGLVILSQMPMSMAQTTQCLSGCFYVPGCPFLVTS. The Lumenal segment spans residues 485–1067; the sequence is KFEKCSEKDQ…YFGSFFDTIR (583 aa). Residues Asn-605 and Asn-980 are each glycosylated (N-linked (GlcNAc...) asparagine; by host). A helical transmembrane segment spans residues 1068-1088; that stretch reads VVLLIAFIFLVTYFCSILTSI. The Cytoplasmic segment spans residues 1089–1135; sequence CKGYVKNESYKSRSKIEDDDEPEIKAPMLMKDTMTRRRPPMDFSHLV.

It belongs to the tospovirus envelope glycoprotein family. In terms of assembly, homodimer; disulfide-linked. Heterodimer with Glycoprotein C. Interacts with nucleoprotein. Heterodimer with Glycoprotein N. Interacts with nucleoprotein. Post-translationally, specific enzymatic cleavages in vivo yield mature proteins including Glycoprotein N and Glycoprotein C. Glycosylated with O-linked glycans. Glycosylation is essential for proper subcellular location. In terms of processing, cleaved at acidic pH.

Its subcellular location is the virion membrane. It is found in the host Golgi apparatus membrane. It localises to the host endoplasmic reticulum membrane. Its function is as follows. Forms the spikes present at the surface of the virion together with Glycoprotein C. They are able to attach the virion to a cell receptor and to promote fusion of membranes after endocytosis of the virion. Plays a role in virus binding and/or entry into the vector midgut. Functionally, forms the spikes present at the surface of the virion together with Glycoprotein N. They are able to attach the virion to a cell receptor and to promote fusion of membranes after endocytosis of the virion. Probable class II fusion protein. This is Envelopment polyprotein (GP) from Tomato spotted wilt virus (strain Brazilian Br-01) (TSWV).